Here is a 269-residue protein sequence, read N- to C-terminus: 3'(2'),5'-bisphosphate nucleotidase CysQ (269 aa).

The Mg(2+) site is built by Glu69, Asp89, Leu91, Asp92, and Asp216. Glu69 lines the substrate pocket. Residues 91–94 (LDGT) and Asp216 each bind substrate.

It belongs to the inositol monophosphatase superfamily. CysQ family. The cofactor is Mg(2+).

The protein localises to the cell inner membrane. The catalysed reaction is adenosine 3',5'-bisphosphate + H2O = AMP + phosphate. Functionally, converts adenosine-3',5'-bisphosphate (PAP) to AMP. The protein is 3'(2'),5'-bisphosphate nucleotidase CysQ of Aggregatibacter actinomycetemcomitans (Actinobacillus actinomycetemcomitans).